The following is a 1279-amino-acid chain: Photoreceptor cilium actin regulator (1279 aa).

Gly2 carries N-myristoyl glycine lipidation. Cys3 carries the S-palmitoyl cysteine lipid modification. Disordered regions lie at residues 101-168 (NKPQ…KGRV), 380-598 (AAQV…SHVE), 802-821 (EVSESEDISGDVEEDLENLP), 860-1107 (ASHP…TTAK), and 1127-1279 (KSSS…KEIS). Basic and acidic residues predominate over residues 126-168 (FSGKESKENTPQETSKGNRESVCHQPDSQDHCRQSATESKGRV). Positions 477–491 (SEEEDCSPEEEDELS) are enriched in acidic residues. 2 stretches are compositionally biased toward basic and acidic residues: residues 535 to 547 (LKMKEAISERIKF) and 580 to 598 (GPERQRRSQSEGCLKSHVE). A compositionally biased stretch (acidic residues) spans 804-818 (SESEDISGDVEEDLE). 3 stretches are compositionally biased toward polar residues: residues 886–901 (GSGSSPRLHSTRSGST), 913–925 (DLNSKQTASPSSE), and 955–965 (TNPTPGQSRTL). The span at 972–990 (FSRDPHSSEASRKGPERSL) shows a compositional bias: basic and acidic residues. Positions 1047 to 1062 (RKTTSPPCQHPQSNPA) are enriched in polar residues. Positions 1076 to 1090 (PSSASCSSPSVSPSR) are enriched in low complexity. Basic and acidic residues predominate over residues 1091–1100 (GSKDSIHSED). The segment covering 1226–1241 (WNNSRVPELQGSSTKR) has biased composition (polar residues). The segment covering 1259–1279 (RMNRGQDRPQPESQPQHKEIS) has biased composition (basic and acidic residues).

Specifically expressed in retina.

The protein localises to the cell projection. It is found in the cilium. The protein resides in the photoreceptor outer segment. Its subcellular location is the photoreceptor inner segment. Functionally, plays an essential role for normal photoreceptor cell maintenance and vision. The polypeptide is Photoreceptor cilium actin regulator (Mus musculus (Mouse)).